We begin with the raw amino-acid sequence, 546 residues long: Arginine--tRNA ligase (546 aa).

The 'HIGH' region signature appears at 117–127 (ANPTGPLHIGR).

Belongs to the class-I aminoacyl-tRNA synthetase family.

The protein localises to the cytoplasm. It catalyses the reaction tRNA(Arg) + L-arginine + ATP = L-arginyl-tRNA(Arg) + AMP + diphosphate. In Thermoplasma acidophilum (strain ATCC 25905 / DSM 1728 / JCM 9062 / NBRC 15155 / AMRC-C165), this protein is Arginine--tRNA ligase.